Here is a 377-residue protein sequence, read N- to C-terminus: Hsc70-interacting protein 2 (377 aa).

A disordered region spans residues 68-123; the sequence is AKANEPANAPEDSEDEKSLSDPESDVELDMEGVIEADSDPAQPMGNYSKKATEEEV. Ser-80 carries the phosphoserine modification. Over residues 89-105 the composition is skewed to acidic residues; it reads PESDVELDMEGVIEADS. 3 TPR repeats span residues 126 to 159, 161 to 193, and 195 to 227; these read ASELRAQAASAYGQQKFDEAIALYTKAIELSPGN, LFHAKRGQAFLKLKKPNACIRDCDVALELNSDL, and AGYKFRGRARRLLGDFELAAHDLRQACKLDFDE. Residues 239–276 adopt a coiled-coil conformation; sequence NAKKIEQHRLKQERRQAERKIKERQRDQRRARKEQEKH. Residues 243-277 show a composition bias toward basic and acidic residues; sequence IEQHRLKQERRQAERKIKERQRDQRRARKEQEKHN. Disordered regions lie at residues 243-302 and 344-377; these read IEQH…DILG and DVGAAFGQAGEKAGKPSEPKPKKDSADFVDDGLD. Residues 282–293 are compositionally biased toward gly residues; sequence GSSGEFSGGNPG. The region spanning 294–336 is the STI1 domain; the sequence is NGNMSDILGAMSDPEVSAAIQDILSNPGNITKYASNPKIYNLI. Residues 355–369 are compositionally biased toward basic and acidic residues; sequence KAGKPSEPKPKKDSA.

It belongs to the FAM10 family. In terms of assembly, homotetramer. Interacts with Hsc70 as well as DNAJ homologs and Hsp90.

The protein localises to the cytoplasm. One HIP oligomer binds the ATPase domains of at least two Hsc70 molecules dependent on activation of the Hsc70 ATPase by Hsp40. Stabilizes the ADP state of Hsc70 that has a high affinity for substrate protein. Through its own chaperone activity, it may contribute to the interaction of Hsc70 with various target proteins. The protein is Hsc70-interacting protein 2 of Drosophila melanogaster (Fruit fly).